The following is a 288-amino-acid chain: Phosphatidylserine decarboxylase proenzyme (288 aa).

Catalysis depends on charge relay system; for autoendoproteolytic cleavage activity residues Asp-90, His-147, and Ser-252. The Schiff-base intermediate with substrate; via pyruvic acid; for decarboxylase activity role is filled by Ser-252. Ser-252 is subject to Pyruvic acid (Ser); by autocatalysis.

It belongs to the phosphatidylserine decarboxylase family. PSD-B subfamily. Prokaryotic type I sub-subfamily. In terms of assembly, heterodimer of a large membrane-associated beta subunit and a small pyruvoyl-containing alpha subunit. It depends on pyruvate as a cofactor. Is synthesized initially as an inactive proenzyme. Formation of the active enzyme involves a self-maturation process in which the active site pyruvoyl group is generated from an internal serine residue via an autocatalytic post-translational modification. Two non-identical subunits are generated from the proenzyme in this reaction, and the pyruvate is formed at the N-terminus of the alpha chain, which is derived from the carboxyl end of the proenzyme. The autoendoproteolytic cleavage occurs by a canonical serine protease mechanism, in which the side chain hydroxyl group of the serine supplies its oxygen atom to form the C-terminus of the beta chain, while the remainder of the serine residue undergoes an oxidative deamination to produce ammonia and the pyruvoyl prosthetic group on the alpha chain. During this reaction, the Ser that is part of the protease active site of the proenzyme becomes the pyruvoyl prosthetic group, which constitutes an essential element of the active site of the mature decarboxylase.

The protein resides in the cell membrane. The enzyme catalyses a 1,2-diacyl-sn-glycero-3-phospho-L-serine + H(+) = a 1,2-diacyl-sn-glycero-3-phosphoethanolamine + CO2. Its pathway is phospholipid metabolism; phosphatidylethanolamine biosynthesis; phosphatidylethanolamine from CDP-diacylglycerol: step 2/2. Functionally, catalyzes the formation of phosphatidylethanolamine (PtdEtn) from phosphatidylserine (PtdSer). This chain is Phosphatidylserine decarboxylase proenzyme, found in Pseudomonas fluorescens (strain ATCC BAA-477 / NRRL B-23932 / Pf-5).